The following is a 111-amino-acid chain: Nucleoid-associated protein CYA_1369 (111 aa).

Belongs to the YbaB/EbfC family. As to quaternary structure, homodimer.

It localises to the cytoplasm. The protein localises to the nucleoid. Functionally, binds to DNA and alters its conformation. May be involved in regulation of gene expression, nucleoid organization and DNA protection. The sequence is that of Nucleoid-associated protein CYA_1369 from Synechococcus sp. (strain JA-3-3Ab) (Cyanobacteria bacterium Yellowstone A-Prime).